Here is a 291-residue protein sequence, read N- to C-terminus: tRNA dimethylallyltransferase (291 aa).

17–24 contacts ATP; the sequence is GPTASGKS. 19–24 provides a ligand contact to substrate; it reads TASGKS.

Belongs to the IPP transferase family. Monomer. Mg(2+) serves as cofactor.

It carries out the reaction adenosine(37) in tRNA + dimethylallyl diphosphate = N(6)-dimethylallyladenosine(37) in tRNA + diphosphate. Its function is as follows. Catalyzes the transfer of a dimethylallyl group onto the adenine at position 37 in tRNAs that read codons beginning with uridine, leading to the formation of N6-(dimethylallyl)adenosine (i(6)A). The chain is tRNA dimethylallyltransferase from Cereibacter sphaeroides (strain ATCC 17025 / ATH 2.4.3) (Rhodobacter sphaeroides).